A 655-amino-acid polypeptide reads, in one-letter code: MGIFSIANQHIRFAVKLATAIVLALFVGFHFQLETPRWAVLTAAIVAAGPAFAAGGEPYSGAIRYRGFLRIIGTFIGCIAGLVIIIAMIRAPLLMILVCCIWAGFCTWISSLVRIENSYAWGLAGYTALIIVITIQPEPLLTPQFAVERCSEIVIGIVCAIMADLLFSPRSIKQEVDRELESLLVAQYQLMQLCIKHGDGEVVDKAWGDLVRRTTALQGMRSNLNMESSRWARANRRLKAINTLSLTLITQSCETYLIQNTRPELITDTFREFFDTPVETAQDVHKQLKRLRRVIAWTGERETPVTIYSWVAAATRYQLLKRGVISNTKINATEEEILQGEPEVKVESAERHHAMVNFWRTTLSCILGTLFWLWTGWTSGSGAMVMIAVVTSLAMRLPNPRMVAIDFIYGTLAALPLGLLYFLVIIPNTQQSMLLLCISLAVLGFFLGIEVQKRRLGSMGALASTINIIVLDNPMTFHFSQFLDSALGQIVGCVLAFTVILLVRDKSRDRTGRVLLNQFVSAAVSAMTTNVARRKENHLPALYQQLFLLMNKFPGDLPKFRLALTMIIAHQRLRDAPIPINEDLSAFHRQMRRTADHVISARSDDKRRRYFGQLLEELEIYQEKLRIWQAPPQVTEPVHRLAGMLHKYQHALTDS.

11 consecutive transmembrane segments (helical) span residues F13–L33, W38–P58, L69–I89, L93–V113, W121–L141, E152–I172, L370–V390, F407–P427, Q431–V451, M459–F479, and F482–L502.

It belongs to the aromatic acid exporter ArAE (TC 2.A.85) family.

Its subcellular location is the cell inner membrane. In terms of biological role, forms an efflux pump with AaeA. Could function as a metabolic relief valve, allowing to eliminate certain compounds when they accumulate to high levels in the cell. The sequence is that of p-hydroxybenzoic acid efflux pump subunit AaeB from Escherichia coli O81 (strain ED1a).